Reading from the N-terminus, the 106-residue chain is N(2)-fixation sustaining protein CowN (106 aa).

The protein belongs to the CowN family.

Is required to sustain N(2)-dependent growth in the presence of low levels of carbon monoxide (CO). Probably acts by protecting the N(2) fixation ability of the nitrogenase complex, which is inactivated in the presence of CO. The protein is N(2)-fixation sustaining protein CowN of Denitrovibrio acetiphilus (strain DSM 12809 / NBRC 114555 / N2460).